We begin with the raw amino-acid sequence, 454 residues long: Venom prothrombin activator porpharin-D (454 aa).

Positions Met1–Ala20 are cleaved as a signal peptide. A propeptide spanning residues Glu21 to Arg40 is cleaved from the precursor. One can recognise a Gla domain in the interval Ser41–Asp86. 4-carboxyglutamate occurs at positions 46, 47, 54, 56, 59, 60, 65, 66, 69, and 75. Residues Cys57 and Cys62 are joined by a disulfide bond. An EGF-like 1; calcium-binding domain is found at Asp86–Glu122. 11 disulfide bridges follow: Cys90-Cys101, Cys95-Cys110, Cys112-Cys121, Cys129-Cys140, Cys136-Cys149, Cys151-Cys164, Cys172-Cys316, Cys216-Cys221, Cys236-Cys252, Cys364-Cys378, and Cys389-Cys417. The O-linked (Hex...) serine glycan is linked to Ser92. In terms of domain architecture, EGF-like 2 spans Cys129–Cys164. A propeptide spans Arg182–Arg209 (activation peptide). In terms of domain architecture, Peptidase S1 spans Ile210–Arg441. Catalysis depends on charge relay system residues His251 and Asp296. Ser393 (charge relay system) is an active-site residue.

It belongs to the peptidase S1 family. Snake venom subfamily. As to quaternary structure, heterodimer of a light chain and a heavy chain; disulfide-linked. The vitamin K-dependent, enzymatic carboxylation of some glutamate residues allows the modified protein to bind calcium. Expressed by the venom gland.

The protein localises to the secreted. The enzyme catalyses Selective cleavage of Arg-|-Thr and then Arg-|-Ile bonds in prothrombin to form thrombin.. In terms of biological role, snake prothrombin activator that attacks the hemostatic system of prey. This protein is functionally similar to blood coagulation factor Xa. In Pseudechis porphyriacus (Red-bellied black snake), this protein is Venom prothrombin activator porpharin-D.